Consider the following 231-residue polypeptide: MTHSVSPIGYIRSCFMEKFAIPRQPLLAPAARGTLELLPPFDQVEALEGLEQVSHVWLLFLFHQALEDKPRLKVRPPRLGGNRSLGVFATRATHRPNGIGQSVVRLEGFEAGRLWLSGIDLLDGTPVLDIKPYVPYADAVADARNGIADAPPPGIAVEWSEQARRQAHEHGQRLRQPVAELIEQCLAQDPRPAYQKPEPGRRYGVRLWDLDVHWHYPRPDLIRVLDVAGGD.

The region spanning 5 to 142 (VSPIGYIRSC…YVPYADAVAD (138 aa)) is the TsaA-like domain. S-adenosyl-L-methionine-binding positions include 22-24 (PRQ), 63-64 (HQ), arginine 91, and 122-125 (LDGT).

The protein belongs to the tRNA methyltransferase O family.

The polypeptide is Putative S-adenosylmethionine-dependent methyltransferase RcsF (rcsF) (Pseudomonas aeruginosa (strain ATCC 15692 / DSM 22644 / CIP 104116 / JCM 14847 / LMG 12228 / 1C / PRS 101 / PAO1)).